The following is a 195-amino-acid chain: L-rhamnose-binding lectin CSL2 (195 aa).

SUEL-type lectin domains follow at residues Thr-1–Leu-97 and Thr-104–Gly-195.

Its function is as follows. L-rhamnose binding lectin. Has hemagglutinating activity towards rabbit erythrocytes and human type B erythrocytes. Hemagglutinating activity is inhibited by smooth-type lipopolysaccharide (LPS) from S.flexneri 1A and E.coli K12, but not by rough-type LPS from S.flexneri, E.coli K12 and E.coli EH100. Agglutinates E.coli K12 and B.subtilis. This chain is L-rhamnose-binding lectin CSL2, found in Oncorhynchus keta (Chum salmon).